Consider the following 255-residue polypeptide: 4-hydroxy-tetrahydrodipicolinate reductase (255 aa).

Residues 8 to 13, 89 to 91, and 114 to 117 contribute to the NAD(+) site; these read GASGRM, GTT, and SSNY. Residue His146 is the Proton donor/acceptor of the active site. His147 contributes to the (S)-2,3,4,5-tetrahydrodipicolinate binding site. Lys150 serves as the catalytic Proton donor. Residue 156–157 participates in (S)-2,3,4,5-tetrahydrodipicolinate binding; sequence GT.

The protein belongs to the DapB family.

It is found in the cytoplasm. The catalysed reaction is (S)-2,3,4,5-tetrahydrodipicolinate + NAD(+) + H2O = (2S,4S)-4-hydroxy-2,3,4,5-tetrahydrodipicolinate + NADH + H(+). It carries out the reaction (S)-2,3,4,5-tetrahydrodipicolinate + NADP(+) + H2O = (2S,4S)-4-hydroxy-2,3,4,5-tetrahydrodipicolinate + NADPH + H(+). It functions in the pathway amino-acid biosynthesis; L-lysine biosynthesis via DAP pathway; (S)-tetrahydrodipicolinate from L-aspartate: step 4/4. Its function is as follows. Catalyzes the conversion of 4-hydroxy-tetrahydrodipicolinate (HTPA) to tetrahydrodipicolinate. The protein is 4-hydroxy-tetrahydrodipicolinate reductase of Methanoregula boonei (strain DSM 21154 / JCM 14090 / 6A8).